A 156-amino-acid polypeptide reads, in one-letter code: Small ribosomal subunit protein uS7 (156 aa).

Belongs to the universal ribosomal protein uS7 family. In terms of assembly, part of the 30S ribosomal subunit. Contacts proteins S9 and S11.

Functionally, one of the primary rRNA binding proteins, it binds directly to 16S rRNA where it nucleates assembly of the head domain of the 30S subunit. Is located at the subunit interface close to the decoding center, probably blocks exit of the E-site tRNA. The chain is Small ribosomal subunit protein uS7 from Rhodopseudomonas palustris (strain BisB5).